The primary structure comprises 79 residues: MSFEVFEKLEVKVQQAIDTITLLQMEIEELKEKNNTLTQEVQDAAGSREALVRENEQLKQEQHVWQDRLRALLGKMEEV.

Positions F6–E78 form a coiled coil.

This sequence belongs to the ZapB family. Homodimer. The ends of the coiled-coil dimer bind to each other, forming polymers. Interacts with FtsZ.

It localises to the cytoplasm. Functionally, non-essential, abundant cell division factor that is required for proper Z-ring formation. It is recruited early to the divisome by direct interaction with FtsZ, stimulating Z-ring assembly and thereby promoting cell division earlier in the cell cycle. Its recruitment to the Z-ring requires functional FtsA or ZipA. This Yersinia pseudotuberculosis serotype O:1b (strain IP 31758) protein is Cell division protein ZapB.